The chain runs to 160 residues: Cytosolic iron-sulfur assembly component 2A (160 aa).

H89, H123, E150, and E153 together coordinate Zn(2+).

Belongs to the MIP18 family. In terms of assembly, monomer and homodimer. Component of the CIA complex. Interacts with CIAO1. Interacts with IREB2. Interacts with APAF1.

Its subcellular location is the cytoplasm. Component of the cytosolic iron-sulfur protein assembly (CIA) complex, a multiprotein complex that mediates the incorporation of iron-sulfur cluster into extramitochondrial Fe/S proteins. As a CIA complex component and in collaboration with CIAO1 specifically matures ACO1 and stabilizes IREB2, connecting cytosolic iron-sulfur protein maturation with cellular iron regulation. May play a role in chromosome segregation through establishment of sister chromatid cohesion. May induce apoptosis in collaboration with APAF1. The sequence is that of Cytosolic iron-sulfur assembly component 2A from Bos taurus (Bovine).